We begin with the raw amino-acid sequence, 66 residues long: MILVNVHAGNCDNTLKNFKKKLQRELYFRKMKEQRYYETPSAKRVRKVQEAARRQRKFARKKMFDE.

It belongs to the bacterial ribosomal protein bS21 family.

The chain is Small ribosomal subunit protein bS21 from Rickettsia africae (strain ESF-5).